A 534-amino-acid chain; its full sequence is NAD(P)H-quinone oxidoreductase chain 4 (534 aa).

Helical transmembrane passes span 6 to 26, 38 to 58, 91 to 111, 117 to 137, 138 to 158, 171 to 191, 214 to 234, 245 to 265, 279 to 299, 316 to 336, 337 to 357, 377 to 399, 419 to 439, and 466 to 486; these read FPWLSTLIFFPIMATVALPFI, WYALVIGLIDFVLLIYAFYTQ, MPLILLTGFITSLAILASWPV, LFYFLILAMYGGQIAVFAVQD, LLVFFLVWELELVPVYLLLSI, FILYTAISSLFILVAALAMAF, LLCYTGFLVAFAVKLPIVPLH, TAPVHMLLAGILLKMGGYALI, FAPALIILGVVNIIYAALTSF, MGFVLIGIASFTDLGMSGAVL, QMVSHGLIGASLFFLVGATYD, IFAMFTTCSMASLALPGMSGFVA, VPVVILAGIGVILTPIYLLSM, and IFVIACLLVPIIGIGLYPKII.

Belongs to the complex I subunit 4 family.

Its subcellular location is the cellular thylakoid membrane. It carries out the reaction a plastoquinone + NADH + (n+1) H(+)(in) = a plastoquinol + NAD(+) + n H(+)(out). The enzyme catalyses a plastoquinone + NADPH + (n+1) H(+)(in) = a plastoquinol + NADP(+) + n H(+)(out). Its function is as follows. NDH-1 shuttles electrons from NAD(P)H, via FMN and iron-sulfur (Fe-S) centers, to quinones in the respiratory chain. The immediate electron acceptor for the enzyme in this species is believed to be plastoquinone. Couples the redox reaction to proton translocation (for every two electrons transferred, four hydrogen ions are translocated across the cytoplasmic membrane), and thus conserves the redox energy in a proton gradient. This chain is NAD(P)H-quinone oxidoreductase chain 4, found in Acaryochloris marina (strain MBIC 11017).